The primary structure comprises 1125 residues: tRNA (34-2'-O)-methyltransferase regulator WDR6 (1125 aa).

Met-1 is subject to N-acetylmethionine. 17 WD repeats span residues 89–130, 155–197, 207–246, 256–294, 295–335, 346–384, 433–475, 489–528, 567–605, 611–650, 652–692, 725–765, 767–798, 860–905, 912–958, 982–1024, and 1047–1085; these read SKGL…GNVA, TDRC…PDNK, GHVG…VPGG, GHSA…QAFR, GHQG…YPGL, SRPG…WEQL, LFQG…TGKA, SKQR…FKKP, HGKQ…QPVL, RGMN…KLHI, NCGG…IRPN, EHPD…GAAH, LTAV…HPGL, TRYM…RILH, HHKR…DRGS, AHSC…PELE, and AHAA…PTFM.

The protein belongs to the WD repeat WDR6 family. Interacts with FTSJ1; the interaction is direct, and required for 2'-O-methylation of position 34 in substrate tRNAs. Interacts with IRS4. Interacts with STK11/LKB1. Expressed in hypothalamus, hippocampus, cerebrum cortex and cerebellum.

Its subcellular location is the cytoplasm. Together with methyltransferase FTSJ1, methylates the 2'-O-ribose of nucleotides at position 34 of the tRNA anticodon loop of substrate tRNAs. Required for the correct positioning of the substrate tRNA for methylation. Required to suppress amino acid starvation-induced autophagy. Enhances the STK11/LKB1-induced cell growth suppression activity. This chain is tRNA (34-2'-O)-methyltransferase regulator WDR6 (Wdr6), found in Rattus norvegicus (Rat).